The primary structure comprises 110 residues: Glutaredoxin-1 (110 aa).

The 104-residue stretch at 7 to 110 (IKHVKDLIAE…EELLEPILAN (104 aa)) folds into the Glutaredoxin domain. A Glycyl lysine isopeptide (Lys-Gly) (interchain with G-Cter in ubiquitin) cross-link involves residue K11. Residues 24–29 (KTYCPY), Q63, V75, and 88–89 (ND) each bind glutathione. C27 carries the post-translational modification S-glutathionyl cysteine; alternate. An intrachain disulfide couples C27 to C30.

Belongs to the glutaredoxin family.

The protein localises to the cytoplasm. It localises to the nucleus. The catalysed reaction is 2 glutathione + H2O2 = glutathione disulfide + 2 H2O. It carries out the reaction 1-chloro-2,4-dinitrobenzene + glutathione = 2,4-dinitrophenyl-S-glutathione + chloride + H(+). The enzyme catalyses RX + glutathione = an S-substituted glutathione + a halide anion + H(+). In terms of biological role, component of the glutathione system which performs several activities such as glutathione-dependent oxidoreductase, glutathione peroxidase and glutathione S-transferase (GST) activity. The disulfide bond functions as an electron carrier in the glutathione-dependent synthesis of deoxyribonucleotides by the enzyme ribonucleotide reductase. In addition, it is also involved in reducing cytosolic protein- and non-protein-disulfides in a coupled system with glutathione reductase. Required for resistance to reactive oxygen species (ROS) by directly reducing hydroperoxides and for the detoxification of ROS-mediated damage. GRX1 is less active as an oxidoreductase than GRX2. The protein is Glutaredoxin-1 (GRX1) of Saccharomyces cerevisiae (strain ATCC 204508 / S288c) (Baker's yeast).